The sequence spans 203 residues: uncharacterized protein (203 aa).

A signal peptide spans methionine 1–alanine 23. One can recognise an SH3b domain in the interval glutamate 24 to proline 87. Residues isoleucine 167 to isoleucine 189 traverse the membrane as a helical segment.

It to E.coli YgiM.

The protein resides in the membrane. This is an uncharacterized protein from Haemophilus influenzae (strain ATCC 51907 / DSM 11121 / KW20 / Rd).